The sequence spans 1203 residues: uncharacterized protein (1203 aa).

This is an uncharacterized protein from Magallana gigas (Pacific oyster).